We begin with the raw amino-acid sequence, 407 residues long: Aurora kinase (407 aa).

Disordered stretches follow at residues 1–43 and 66–137; these read MTPT…STSS and ERQG…TQSK. 2 stretches are compositionally biased toward low complexity: residues 31–43 and 126–136; these read SASTTSTTASTSS and STTTTMTSTQS. Positions 147–399 constitute a Protein kinase domain; it reads FDIGRPLGKG…LEGVIAHAWI (253 aa). ATP is bound by residues Lys-157, Lys-176, and 224-227; that span reads LEYA. The Proton acceptor role is filled by Asp-272. ATP is bound at residue Asp-290.

The protein belongs to the protein kinase superfamily. Ser/Thr protein kinase family.

It is found in the cytoplasm. The protein localises to the cytoskeleton. It localises to the spindle. The protein resides in the midbody. Its subcellular location is the microtubule organizing center. It is found in the centrosome. The protein localises to the nucleus. It localises to the chromosome. The protein resides in the centromere. It catalyses the reaction L-seryl-[protein] + ATP = O-phospho-L-seryl-[protein] + ADP + H(+). The catalysed reaction is L-threonyl-[protein] + ATP = O-phospho-L-threonyl-[protein] + ADP + H(+). Cdc2 activity is required for activation. Its function is as follows. Serine/threonine protein kinase that contributes to the regulation of cell cycle progression. Involved in meiotic apparatus formation and polar body extrusion. Contributes to Plk1 activation and phosphorylation of histone H3 at 'Ser-10' during meiosis I. Required for accurate progression of early embryonic M phase. Involved in chromosome alignment and cleavage furrow formation during early embryonic cycles. May be involved in mitotic spindle formation and cytokinesis. The sequence is that of Aurora kinase from Patiria pectinifera (Starfish).